Here is a 171-residue protein sequence, read N- to C-terminus: S-ribosylhomocysteine lyase (171 aa).

The Fe cation site is built by His-54, His-58, and Cys-128.

The protein belongs to the LuxS family. Homodimer. It depends on Fe cation as a cofactor.

It carries out the reaction S-(5-deoxy-D-ribos-5-yl)-L-homocysteine = (S)-4,5-dihydroxypentane-2,3-dione + L-homocysteine. Involved in the synthesis of autoinducer 2 (AI-2) which is secreted by bacteria and is used to communicate both the cell density and the metabolic potential of the environment. The regulation of gene expression in response to changes in cell density is called quorum sensing. Catalyzes the transformation of S-ribosylhomocysteine (RHC) to homocysteine (HC) and 4,5-dihydroxy-2,3-pentadione (DPD). This Escherichia fergusonii (strain ATCC 35469 / DSM 13698 / CCUG 18766 / IAM 14443 / JCM 21226 / LMG 7866 / NBRC 102419 / NCTC 12128 / CDC 0568-73) protein is S-ribosylhomocysteine lyase.